The chain runs to 118 residues: Large ribosomal subunit protein bL21c (118 aa).

Belongs to the bacterial ribosomal protein bL21 family. In terms of assembly, part of the 50S ribosomal subunit.

It is found in the plastid. The protein localises to the chloroplast. In terms of biological role, this protein binds to 23S rRNA. The chain is Large ribosomal subunit protein bL21c from Psilotum nudum (Whisk fern).